Here is a 58-residue protein sequence, read N- to C-terminus: SPbeta prophage-derived uncharacterized protein YonT (58 aa).

Residues 6-26 (GIVVAFLISLTVLTINSLTIV) traverse the membrane as a helical segment. Residues 35 to 58 (GTSKKKKRIRKRLRPKRQRQRIRR) are disordered. Basic residues predominate over residues 36-58 (TSKKKKRIRKRLRPKRQRQRIRR).

Its subcellular location is the cell membrane. The sequence is that of SPbeta prophage-derived uncharacterized protein YonT (yonT) from Bacillus subtilis (strain 168).